The chain runs to 330 residues: PDZ and LIM domain protein 4 (330 aa).

The PDZ domain maps to 1-84; sequence MTHAVTLRGP…HLTLSVSRPE (84 aa). Disordered regions lie at residues 104–154 and 219–239; these read DPEA…NEVT and EAGE…KPAA. 6 positions are modified to phosphoserine: Ser111, Ser115, Ser118, Ser119, Ser124, and Ser134. Residues 111 to 122 are compositionally biased toward polar residues; that stretch reads SPATSRRSSISG. The LIM zinc-binding domain occupies 255–305; it reads CTRCGHGIVGTIVKARDKLYHPECFMCSDCGLNLKQRGYFFLDERLYCENH.

In terms of assembly, homodimer. Interacts (via C-terminus only or via combined C-terminus and LIM domain, but not LIM domain only) with PTPN13 (via the second or fourth PDZ domains). Found in a complex with PTPN13 and TRIP6. Interacts (via PDZ domain) with ACTN1 and ACTN2 (via C-terminal SDL residues). Interacts (via PDZ domain) with TRIP6 (via the second LIM domain or via the third LIM domain plus C-terminus). Interacts (via LIM domain) with GRIA1 (via C-terminus); this interaction as well as the interaction with alpha-actinin is required for their colocalization in early endosomes. Interacts with PDLIM1. Forms (via LIM domain) a heterodimer with PDLIM3. Interacts directly with SRC (via kinase domain and to a lesser extent the SH2 domain). In terms of processing, phosphorylated on tyrosine residue(s). Can be dephosphorylated by PTPN13. In terms of tissue distribution, detected in several tissues, most prominent in brain and heart of adults. Expressed in embryonic fibroblasts.

It is found in the cytoplasm. The protein localises to the cytoskeleton. Its subcellular location is the cell projection. It localises to the dendritic spine. The protein resides in the early endosome membrane. It is found in the recycling endosome membrane. The protein localises to the nucleus. Its subcellular location is the perinuclear region. It localises to the lamellipodium. The protein resides in the synapse. It is found in the synaptosome. Its function is as follows. Suppresses SRC activation by recognizing and binding to active SRC and facilitating PTPN13-mediated dephosphorylation of SRC 'Tyr-419' leading to its inactivation. Inactivated SRC dissociates from this protein allowing the initiation of a new SRC inactivation cycle. Involved in reorganization of the actin cytoskeleton. In nonmuscle cells, binds to ACTN1 (alpha-actinin-1), increases the affinity of ACTN1 to F-actin (filamentous actin), and promotes formation of actin stress fibers. Involved in regulation of the synaptic AMPA receptor transport in dendritic spines of hippocampal pyramidal neurons directing the receptors toward an insertion at the postsynaptic membrane. Links endosomal surface-internalized GRIA1-containing AMPA receptors to the alpha-actinin/actin cytoskeleton. Increases AMPA receptor-mediated excitatory postsynaptic currents in neurons. In Rattus norvegicus (Rat), this protein is PDZ and LIM domain protein 4 (Pdlim4).